The following is a 118-amino-acid chain: Ribosome-binding factor A (118 aa).

The protein belongs to the RbfA family. As to quaternary structure, monomer. Binds 30S ribosomal subunits, but not 50S ribosomal subunits or 70S ribosomes.

The protein localises to the cytoplasm. Functionally, one of several proteins that assist in the late maturation steps of the functional core of the 30S ribosomal subunit. Associates with free 30S ribosomal subunits (but not with 30S subunits that are part of 70S ribosomes or polysomes). Required for efficient processing of 16S rRNA. May interact with the 5'-terminal helix region of 16S rRNA. The sequence is that of Ribosome-binding factor A from Bacillus cereus (strain B4264).